The following is a 211-amino-acid chain: Soluble inorganic pyrophosphatase PPA1 (211 aa).

Residues K61 and R75 each contribute to the substrate site. Y83 acts as the Proton donor in catalysis. Y87 is a binding site for substrate. 3 residues coordinate Mg(2+): D97, D102, and D134. Y171 lines the substrate pocket.

The protein belongs to the PPase family. The cofactor is Mg(2+).

It localises to the cytoplasm. It catalyses the reaction diphosphate + H2O = 2 phosphate + H(+). With respect to regulation, strongly inhibited by Ca(2+). Its function is as follows. Catalyzes the irreversible hydrolysis of pyrophosphate (PPi) to phosphate. In Solanum tuberosum (Potato), this protein is Soluble inorganic pyrophosphatase PPA1.